The primary structure comprises 423 residues: Vitamin D3 receptor (423 aa).

Residues Cys24, Cys27, Cys41, Cys44, Cys60, Cys66, Cys76, and Cys79 each contribute to the Zn(2+) site. NR C4-type zinc fingers lie at residues 24-44 and 60-84; these read CGVCGDRATGFHFNAMTCEGC and CPFNGDCRITKDNRRHCQACRLKRC. Positions 24 to 89 form a DNA-binding region, nuclear receptor; that stretch reads CGVCGDRATG…RLKRCVDIGM (66 aa). A hinge region spans residues 97-126; the sequence is DEEVQRKREMIMKRKEEEALKDSLRPKLSE. One can recognise an NR LBD domain in the interval 127–419; the sequence is EQQHIIAILL…LTPLVLEVFG (293 aa). Tyr143 lines the calcitriol pocket. The interval 159–180 is disordered; that stretch reads MDGSTGSYSPRPTLSFSGNSSS. Residues 171-180 show a composition bias toward low complexity; it reads TLSFSGNSSS. Residue Ser233 participates in calcitriol binding. The interaction with coactivator LXXLL motif stretch occupies residues 242–260; sequence KMIPGFRDLTSDDQIVLLK. The calcitriol site is built by Arg270, Ser274, His301, and His393. The short motif at 412–420 is the 9aaTAD element; it reads PLVLEVFGN.

Belongs to the nuclear hormone receptor family. NR1 subfamily. As to quaternary structure, homodimer in the absence of bound vitamin D3. Heterodimer with RXRA after vitamin D3 binding. Interacts with MED1 and NCOA6. Interacts with MED1, NCOA1, NCOA2, NCOA3 and NCOA6 coactivators, leading to a strong increase of transcription of target genes. Interacts with the corepressor NCOR1. Interacts with SNW1. Interacts with IRX4, the interaction does not affect its transactivation activity. Interacts with CRY1. Interacts with CRY2 in a ligand-dependent manner. Post-translationally, ubiquitinated by UBR5, leading to its degradation: UBR5 specifically recognizes and binds ligand-bound VDR when it is not associated with coactivators (NCOAs). In presence of NCOAs, the UBR5-degron is not accessible, preventing its ubiquitination and degradation. As to expression, detected in intestine and kidney.

It is found in the nucleus. Its subcellular location is the cytoplasm. In terms of biological role, nuclear receptor for calcitriol, the active form of vitamin D3 which mediates the action of this vitamin on cells. Enters the nucleus upon vitamin D3 binding where it forms heterodimers with the retinoid X receptor/RXR. The VDR-RXR heterodimers bind to specific response elements on DNA and activate the transcription of vitamin D3-responsive target genes. Plays a central role in calcium homeostasis. Also functions as a receptor for the secondary bile acid lithocholic acid (LCA) and its metabolites. This Rattus norvegicus (Rat) protein is Vitamin D3 receptor (Vdr).